The sequence spans 271 residues: Fatty acid elongase 2 (271 aa).

The helical transmembrane segment at 16-36 threads the bilayer; that stretch reads WMIDNVDVAGFLCLLYLGLVW. N-linked (GlcNAc...) asparagine glycosylation occurs at N52. 2 consecutive transmembrane segments (helical) span residues 59-79 and 110-130; these read VFIM…IVVV and FWVG…VLLV. The short motif at 140 to 144 is the HxxHH motif element; that stretch reads HWYHH. The Nucleophile role is filled by H143. The next 3 helical transmembrane spans lie at 162-182, 194-214, and 241-261; these read IFVF…YFAM, IAPV…AVTM, and GVVM…ESYL.

This sequence belongs to the ELO family.

It is found in the endoplasmic reticulum membrane. The enzyme catalyses an acyl-CoA + malonyl-CoA + H(+) = a 3-oxoacyl-CoA + CO2 + CoA. Its pathway is lipid metabolism; fatty acid biosynthesis. Functionally, involved in the synthesis of fatty acids. Elongates C10 fatty acids to C14. This is Fatty acid elongase 2 from Trypanosoma brucei brucei (strain 927/4 GUTat10.1).